The sequence spans 969 residues: MEAARVGAQSRHLYGGGLGEPDMDRRDKRLFGWDLNDWRWDSDRFVATPVPAAEASGLALNSSPSSSEEAGAASVRNVNARGDSDKRKRVVVIDDDDVEDDELVENGGGSLSLRIGGDAVAHGAGVGGGADEEDRNGKKIRVQGGSPSGPACQVEGCTADLTGVRDYHRRHKVCEMHAKATTAVVGNTVQRFCQQCSRFHPLQEFDEGKRSCRRRLAGHNRRRRKTRPEVAVGGSAFTEDKISSYLLLGLLGVCANLNADNAEHLRGQELISGLLRNLGAVAKSLDPKELCKLLEACQSMQDGSNAGTSETANALVNTAVAEAAGPSNSKMPFVNGDQCGLASSSVVPVQSKSPTVATPDPPACKFKDFDLNDTYGGMEGFEDGYEGSPTPAFKTTDSPNCPSWMHQDSTQSPPQTSGNSDSTSAQSLSSSNGDAQCRTDKIVFKLFEKVPSDLPPVLRSQILGWLSSSPTDIESYIRPGCIILTVYLRLVESAWKELSDNMSSYLDKLLNSSTGNFWASGLVFVMVRHQIAFMHNGQLMLDRPLANSAHHYCKILCVRPIAAPFSTKVNFRVEGLNLVSDSSRLICSFEGSCIFQEDTDNIVDDVEHDDIEYLNFCCPLPSSRGRGFVEVEDGGFSNGFFPFIIAEQDICSEVCELESIFESSSHEQADDDNARNQALEFLNELGWLLHRANIISKQDKVPLASFNIWRFRNLGIFAMEREWCAVTKLLLDFLFTGLVDIGSQSPEEVVLSENLLHAAVRMKSAQMVRFLLGYKPNESLKRTAETFLFRPDAQGPSKFTPLHIAAATDDAEDVLDALTNDPGLVGINTWRNARDGAGFTPEDYARQRGNDAYLNMVEKKINKHLGKGHVVLGVPSSIHPVITDGVKPGEVSLEIGMTVPPPAPSCNACSRQALMYPNSTARTFLYRPAMLTVMGIAVICVCVGLLLHTCPKVYAAPTFRWELLERGPM.

Disordered regions lie at residues 1 to 25 (MEAA…DMDR) and 54 to 81 (EASG…VNAR). Over residues 55–74 (ASGLALNSSPSSSEEAGAAS) the composition is skewed to low complexity. The SBP-type zinc-finger motif lies at 149 to 226 (GPACQVEGCT…AGHNRRRRKT (78 aa)). Zn(2+) is bound by residues C152, C157, C174, H177, C193, C196, H200, and C212. Residues 209-225 (KRSCRRRLAGHNRRRRK) carry the Bipartite nuclear localization signal motif. Residues 377–434 (GMEGFEDGYEGSPTPAFKTTDSPNCPSWMHQDSTQSPPQTSGNSDSTSAQSLSSSNGD) are disordered. Residues 393–419 (FKTTDSPNCPSWMHQDSTQSPPQTSGN) are compositionally biased toward polar residues. The span at 420–431 (SDSTSAQSLSSS) shows a compositional bias: low complexity.

In terms of tissue distribution, ubiquitous.

The protein resides in the nucleus. In terms of biological role, trans-acting factor that binds specifically to the consensus nucleotide sequence 5'-TNCGTACAA-3'. The sequence is that of Squamosa promoter-binding-like protein 6 (SPL6) from Oryza sativa subsp. japonica (Rice).